Reading from the N-terminus, the 864-residue chain is DNA mismatch repair protein MutS (864 aa).

Position 621–628 (621–628 (GPNMGGKS)) interacts with ATP. The interval 804-833 (ETGKPESPAPVASRSSKPSMQADMFAEPQP) is disordered.

Belongs to the DNA mismatch repair MutS family.

This protein is involved in the repair of mismatches in DNA. It is possible that it carries out the mismatch recognition step. This protein has a weak ATPase activity. The chain is DNA mismatch repair protein MutS from Teredinibacter turnerae (strain ATCC 39867 / T7901).